Here is a 258-residue protein sequence, read N- to C-terminus: MSKRPGDIIISTPGSKVRRRLNFDSPYRNRATAPTVHVTNRKRAWMNRPMYRKPMMYRMYRSPDIPRGCEGPCKVQSFEQRDDVKHLGICKVISDVTRGPGLTHRVGKRFCIKSIYILGKIWMDENIKKQNHTNNVMFYLLRDRRPYGNTPQDFGQIFNMFDNEPSTATIENDLRDRFQVLRKFHATVIGGPSGMKEQALVKRFYRLNHHVTYNHQEAGKYENHTENALLLYMACTHASNPVYATLKIRIYFYDSIGN.

The Bipartite nuclear localization signal motif lies at 3–20 (KRPGDIIISTPGSKVRRR). A Nuclear localization signal motif is present at residues 41–55 (RKRAWMNRPMYRKPM). A zinc finger lies at 69–86 (CEGPCKVQSFEQRDDVKH). A Nuclear export signal motif is present at residues 102–123 (LTHRVGKRFCIKSIYILGKIWM). The short motif at 202–249 (KRFYRLNHHVTYNHQEAGKYENHTENALLLYMACTHASNPVYATLKIR) is the Bipartite nuclear localization signal element.

The protein belongs to the geminiviridae capsid protein family. Homomultimer. Binds to single-stranded and double-stranded viral DNA. Interacts (via nuclear localization signals) with host importin alpha-1a.

The protein localises to the virion. It is found in the host nucleus. Its function is as follows. Encapsidates the viral DNA into characteristic twinned ('geminate') particles. Binds the genomic viral ssDNA and shuttles it into and out of the cell nucleus. The CP of bipartite geminiviruses is not required for cell-to-cell or systemic movement. The chain is Capsid protein from Hewittia sublobata (Coralbush).